The primary structure comprises 671 residues: Fusexin 1 (671 aa).

The Cytoplasmic portion of the chain corresponds to 1 to 12 (MRAVSDFLKNKW). The helical transmembrane segment at 13 to 33 (VAVPAVALLILSLGFLAQNYI) threads the bilayer. The Extracellular portion of the chain corresponds to 34-574 (TGSFVSGDQI…DPFCADGPLE (541 aa)). Cystine bridges form between C145–C180, C409–C452, C480–C500, and C513–C528. The fusion loop stretch occupies residues 168–173 (GAIADY). A helical membrane pass occupies residues 575-595 (MLSKMFHLVAGTAVAFFTGSL). Topologically, residues 596 to 628 (GYRAGRWVDGEYQIKGGFDPLKSRSVSRAKRGR) are cytoplasmic. The chain crosses the membrane as a helical span at residues 629 to 649 (FLIGLIAELVSFLLGFYVILL). A topological domain (extracellular) is located at residue V650. Residues 651 to 671 (PIWAQLMVILGYVLFKYYTPF) traverse the membrane as a helical segment.

This sequence belongs to the HAP2/GCS1 family. Fusexin 1 subfamily. As to quaternary structure, homotrimer stabilized by interdomain contacts and numerous Ca(2+) and Na(+) ions.

Its subcellular location is the cell surface. It localises to the cell membrane. Exhibits fusogenic activity. Mediates cell-cell fusion in mammalian cells (bilateral fusion). The protein is Fusexin 1 of Natrinema altunense (strain JCM 12890 / CGMCC 1.3731 / AJ2).